A 549-amino-acid chain; its full sequence is Arginine--tRNA ligase (549 aa).

Residues 132–142 (ANPTGPLHLAH) carry the 'HIGH' region motif.

This sequence belongs to the class-I aminoacyl-tRNA synthetase family. As to quaternary structure, monomer.

The protein resides in the cytoplasm. The enzyme catalyses tRNA(Arg) + L-arginine + ATP = L-arginyl-tRNA(Arg) + AMP + diphosphate. The sequence is that of Arginine--tRNA ligase from Renibacterium salmoninarum (strain ATCC 33209 / DSM 20767 / JCM 11484 / NBRC 15589 / NCIMB 2235).